The primary structure comprises 805 residues: Probable exo-1,4-beta-xylosidase xlnD (805 aa).

The signal sequence occupies residues 1-17 (MAVAALALLALLPQALG). N-linked (GlcNAc...) asparagine glycans are attached at residues Asn-20, Asn-115, Asn-140, Asn-235, and Asn-244. Asp-308 is a catalytic residue. Asn-350, Asn-383, Asn-405, Asn-434, Asn-445, Asn-486, Asn-490, Asn-622, Asn-653, Asn-667, Asn-689, and Asn-711 each carry an N-linked (GlcNAc...) asparagine glycan.

It belongs to the glycosyl hydrolase 3 family.

The protein resides in the secreted. It catalyses the reaction Hydrolysis of (1-&gt;4)-beta-D-xylans, to remove successive D-xylose residues from the non-reducing termini.. It participates in glycan degradation; xylan degradation. In terms of biological role, xylan 1,4-beta-xylosidase involved in the hydrolysis of xylan, a major structural heterogeneous polysaccharide found in plant biomass representing the second most abundant polysaccharide in the biosphere, after cellulose. The sequence is that of Probable exo-1,4-beta-xylosidase xlnD (xlnD) from Aspergillus aculeatus.